Reading from the N-terminus, the 72-residue chain is Translation initiation factor IF-1 (72 aa).

The region spanning 1–72 is the S1-like domain; the sequence is MSKQTAIEQD…TKGRISFRYK (72 aa).

The protein belongs to the IF-1 family. As to quaternary structure, component of the 30S ribosomal translation pre-initiation complex which assembles on the 30S ribosome in the order IF-2 and IF-3, IF-1 and N-formylmethionyl-tRNA(fMet); mRNA recruitment can occur at any time during PIC assembly.

It is found in the cytoplasm. Its function is as follows. One of the essential components for the initiation of protein synthesis. Stabilizes the binding of IF-2 and IF-3 on the 30S subunit to which N-formylmethionyl-tRNA(fMet) subsequently binds. Helps modulate mRNA selection, yielding the 30S pre-initiation complex (PIC). Upon addition of the 50S ribosomal subunit IF-1, IF-2 and IF-3 are released leaving the mature 70S translation initiation complex. The chain is Translation initiation factor IF-1 from Porphyromonas gingivalis (strain ATCC BAA-308 / W83).